A 397-amino-acid chain; its full sequence is Putative gustatory receptor 85a (397 aa).

The Cytoplasmic portion of the chain corresponds to 1 to 56 (MYSLIEAQLLGGKLVNRVMASLRRIIQRSLGYFCALNGILDFNTDIGTGNLRRYRV). Residues 57-77 (LFMYRLLHNFAVISLTLKFLF) traverse the membrane as a helical segment. Over 78 to 90 (DFTDHFKYIESST) the chain is Extracellular. Residues 91–111 (LITVNFFTYFTLVFFALLSSM) traverse the membrane as a helical segment. Residues 112 to 151 (GSCYQWQNRILAVLKELKHQRDLSRHMGYRVPRSKQNSID) lie on the Cytoplasmic side of the membrane. Residues 152-172 (YLLFALTVLLILRLSIHLATF) traverse the membrane as a helical segment. Residues 173–186 (TLSARMGFNHPCNC) are Extracellular-facing. A helical transmembrane segment spans residues 187–207 (FLPECMIFSMNYLLFAILAEI). Over 208-268 (TRCWWSLQSG…RYVTLAYMAR (61 aa)) the chain is Cytoplasmic. A helical transmembrane segment spans residues 269–289 (NLWSGIVAGYLLVRFVIGNGL). The Extracellular portion of the chain corresponds to 290–293 (QDVE). The helical transmembrane segment at 294 to 314 (LVYLVFSFITCIQPLMLSLLV) threads the bilayer. At 315–375 (NSMTSTTGSL…FRINRSLAFR (61 aa)) the chain is on the cytoplasmic side. The chain crosses the membrane as a helical span at residues 376 to 396 (SASLILVHVLYMVQSDYISIT). Asparagine 397 is a topological domain (extracellular).

This sequence belongs to the insect chemoreceptor superfamily. Gustatory receptor (GR) family. Gr22e subfamily.

It localises to the cell membrane. In terms of biological role, probable gustatory receptor which mediates acceptance or avoidance behavior, depending on its substrates. This is Putative gustatory receptor 85a (Gr85a) from Drosophila melanogaster (Fruit fly).